We begin with the raw amino-acid sequence, 424 residues long: Glutamyl-tRNA reductase (424 aa).

Substrate is bound by residues 50 to 53, Ser98, 103 to 105, and Gln109; these read TCNR and EDQ. The Nucleophile role is filled by Cys51. Residue 178-183 participates in NADP(+) binding; it reads GSGEMG.

This sequence belongs to the glutamyl-tRNA reductase family. In terms of assembly, homodimer.

It catalyses the reaction (S)-4-amino-5-oxopentanoate + tRNA(Glu) + NADP(+) = L-glutamyl-tRNA(Glu) + NADPH + H(+). Its pathway is porphyrin-containing compound metabolism; protoporphyrin-IX biosynthesis; 5-aminolevulinate from L-glutamyl-tRNA(Glu): step 1/2. In terms of biological role, catalyzes the NADPH-dependent reduction of glutamyl-tRNA(Glu) to glutamate 1-semialdehyde (GSA). This is Glutamyl-tRNA reductase from Methanoregula boonei (strain DSM 21154 / JCM 14090 / 6A8).